Consider the following 434-residue polypeptide: MHDIKAIRDNPQAFDAAFTRRGLAPIAGSLMKLDEVRRAAVQAAEQAQARRNAASKEIGDAKKAKDNARAEALMAEVTELKTTMPALDAAVKEADEALKKALSEIPNLPLPEVPEGADEHGNVEHHRFGEKPSYSFTPKPHYDLGEALGMMDFEAAAKLSGARFTVLKKGLARLERAIGQFFLDVHTGDHGYTEVNPPLLVKDDAMFGTAQLPKFREDQFAAGAIGSGGEGYWLIPTAEVSLTNLVRESILDEKELPMRLTALTPCFRAEAGAAGRDTRGMIRQHQFTKVELVSITTPEQSKDEHERMLSCAEEVLRRLGLHYRVMTLCTGDMGFASQKTYDIEVWMPGQGEGGAYREISSCSVCGDFQARRMDARSRGSDGKPRFVHTLNGSGTAVGRALIAVIENYQQEDGSIAVPDVLQPYMGGLKVIAKA.

Residue 237-239 (TAE) coordinates L-serine. 268–270 (RAE) lines the ATP pocket. Glutamate 291 is a binding site for L-serine. 358-361 (EISS) contacts ATP. Serine 393 lines the L-serine pocket.

This sequence belongs to the class-II aminoacyl-tRNA synthetase family. Type-1 seryl-tRNA synthetase subfamily. As to quaternary structure, homodimer. The tRNA molecule binds across the dimer.

Its subcellular location is the cytoplasm. It catalyses the reaction tRNA(Ser) + L-serine + ATP = L-seryl-tRNA(Ser) + AMP + diphosphate + H(+). The catalysed reaction is tRNA(Sec) + L-serine + ATP = L-seryl-tRNA(Sec) + AMP + diphosphate + H(+). It participates in aminoacyl-tRNA biosynthesis; selenocysteinyl-tRNA(Sec) biosynthesis; L-seryl-tRNA(Sec) from L-serine and tRNA(Sec): step 1/1. In terms of biological role, catalyzes the attachment of serine to tRNA(Ser). Is also able to aminoacylate tRNA(Sec) with serine, to form the misacylated tRNA L-seryl-tRNA(Sec), which will be further converted into selenocysteinyl-tRNA(Sec). The polypeptide is Serine--tRNA ligase (Rhodopseudomonas palustris (strain ATCC BAA-98 / CGA009)).